The chain runs to 281 residues: GPN-loop GTPase 3 (281 aa).

Gly13 to Thr18 serves as a coordination point for GTP. The Gly-Pro-Asn (GPN)-loop; involved in dimer interface signature appears at Gly70–Asn72. Ser173 to Asp176 serves as a coordination point for GTP. Residues Val259–Gln281 are disordered.

It belongs to the GPN-loop GTPase family. As to quaternary structure, heterodimers with GPN1 or GPN2. Binds to RNA polymerase II (RNAPII).

Functionally, small GTPase required for proper nuclear import of RNA polymerase II and III (RNAPII and RNAPIII). May act at an RNAP assembly step prior to nuclear import. This chain is GPN-loop GTPase 3, found in Mycosarcoma maydis (Corn smut fungus).